A 93-amino-acid polypeptide reads, in one-letter code: SH3 domain-binding glutamic acid-rich-like protein 3 (93 aa).

Ser2 carries the post-translational modification N-acetylserine. The Glutaredoxin domain occupies 2–93 (SGLRVYSTSV…NTLQEFLKLA (92 aa)). Thr9 carries O-linked (GalNAc...) threonine glycosylation.

It belongs to the SH3BGR family. As to quaternary structure, interacts with MYO1C (via its IQ motifs); the interaction is dependent on calcium and takes place at membrane ruffles. May be glycosylated. In terms of tissue distribution, expressed in heart, liver, lung, kidney, spleen, thymus, ovarian follicles, skeletal muscle, brain, lymph node and mammary epithelial and stromal cells (at protein level).

It is found in the cytoplasm. The protein localises to the cytosol. It localises to the cell projection. The protein resides in the ruffle membrane. Its subcellular location is the nucleus. Could act as a modulator of glutaredoxin biological activity. May play a role in cytoskeleton organization. The polypeptide is SH3 domain-binding glutamic acid-rich-like protein 3 (Rattus norvegicus (Rat)).